The chain runs to 224 residues: Ribose-5-phosphate isomerase A (224 aa).

Residues 26–29 (TGST), 81–84 (DGAD), and 94–97 (KGGG) each bind substrate. Glutamate 103 acts as the Proton acceptor in catalysis. Lysine 121 serves as a coordination point for substrate.

It belongs to the ribose 5-phosphate isomerase family. As to quaternary structure, homodimer.

It catalyses the reaction aldehydo-D-ribose 5-phosphate = D-ribulose 5-phosphate. Its pathway is carbohydrate degradation; pentose phosphate pathway; D-ribose 5-phosphate from D-ribulose 5-phosphate (non-oxidative stage): step 1/1. Its function is as follows. Catalyzes the reversible conversion of ribose-5-phosphate to ribulose 5-phosphate. This chain is Ribose-5-phosphate isomerase A, found in Listeria monocytogenes serotype 4b (strain F2365).